The primary structure comprises 359 residues: Phosphate acyltransferase (359 aa).

A disordered region spans residues 338-359; that stretch reads LEGAAGRAARPPPPRRASSHDA.

This sequence belongs to the PlsX family. As to quaternary structure, homodimer. Probably interacts with PlsY.

The protein localises to the cytoplasm. It catalyses the reaction a fatty acyl-[ACP] + phosphate = an acyl phosphate + holo-[ACP]. The protein operates within lipid metabolism; phospholipid metabolism. Functionally, catalyzes the reversible formation of acyl-phosphate (acyl-PO(4)) from acyl-[acyl-carrier-protein] (acyl-ACP). This enzyme utilizes acyl-ACP as fatty acyl donor, but not acyl-CoA. The sequence is that of Phosphate acyltransferase from Anaeromyxobacter sp. (strain Fw109-5).